The sequence spans 125 residues: Calcitonin gene-related peptide 1 (125 aa).

The first 25 residues, 1–25, serve as a signal peptide directing secretion; it reads MVMLKISSFLAVYALVVCQMDSFQA. Residues 26 to 77 constitute a propeptide that is removed on maturation; that stretch reads APVRPGLESITDRVTLSDYEARRLLNALVKDFIQMTAEELEQASEGNSVTAQ. Cysteines 81 and 86 form a disulfide. Phenylalanine amide is present on phenylalanine 116. A propeptide spanning residues 122-125 is cleaved from the precursor; the sequence is SVQI.

Belongs to the calcitonin family.

The protein localises to the secreted. In terms of biological role, CGRP1/CALCA is a peptide hormone that induces vasodilation mediated by the CALCRL-RAMP1 receptor complex. Dilates a variety of vessels including the coronary, cerebral and systemic vasculature. Its abundance in the CNS also points toward a neurotransmitter or neuromodulator role. It also elevates platelet cAMP. CGRP1 can also bind and activate CALCR-RAMP1 (AMYR1) receptor complex. The sequence is that of Calcitonin gene-related peptide 1 (CALCA) from Gallus gallus (Chicken).